A 127-amino-acid chain; its full sequence is Translation initiation factor 5A (127 aa).

Lysine 35 bears the Hypusine mark.

This sequence belongs to the eIF-5A family.

Its subcellular location is the cytoplasm. Functionally, functions by promoting the formation of the first peptide bond. The chain is Translation initiation factor 5A from Methanospirillum hungatei JF-1 (strain ATCC 27890 / DSM 864 / NBRC 100397 / JF-1).